Consider the following 229-residue polypeptide: UPF0758 protein Cbei_0490 (229 aa).

An MPN domain is found at 107–229; sequence KITSPKDLAS…FVSLKERGLI (123 aa). Residues histidine 178, histidine 180, and aspartate 191 each coordinate Zn(2+). The JAMM motif motif lies at 178–191; sequence HNHPSGDPTPSRED.

Belongs to the UPF0758 family.

The polypeptide is UPF0758 protein Cbei_0490 (Clostridium beijerinckii (strain ATCC 51743 / NCIMB 8052) (Clostridium acetobutylicum)).